Reading from the N-terminus, the 624-residue chain is PTS system mannitol-specific EIICBA component (624 aa).

In terms of domain architecture, PTS EIIC type-2 spans 13–336 (FGRFLSNMVM…SFVIASFFLK (324 aa)). The next 6 membrane-spanning stretches (helical) occupy residues 25-46 (IGAF…WLPN), 51-71 (KLVG…SGGK), 135-156 (SSGI…PAVK), 166-186 (VDIL…EPAK), 274-293 (VIAG…AGLV), and 314-335 (VGVL…SFFL). One can recognise a PTS EIIB type-2 domain in the interval 372-463 (QKIFVACDAG…LVQDLSNTKV (92 aa)). Cys-378 (phosphocysteine intermediate; for EIIB activity) is an active-site residue. Residue Cys-378 is modified to Phosphocysteine; by EIIA. The PTS EIIA type-2 domain occupies 482–624 (FVLTEKQVFL…VEKVLALLKA (143 aa)). His-542 functions as the Tele-phosphohistidine intermediate; for EIIA activity in the catalytic mechanism. His-542 is subject to Phosphohistidine; by HPr.

Homodimer. An intramolecular phosphotransfer takes places between His-542 and Cys-378.

The protein localises to the cell inner membrane. It carries out the reaction D-mannitol(out) + N(pros)-phospho-L-histidyl-[protein] = D-mannitol 1-phosphate(in) + L-histidyl-[protein]. In terms of biological role, the phosphoenolpyruvate-dependent sugar phosphotransferase system (sugar PTS), a major carbohydrate active transport system, catalyzes the phosphorylation of incoming sugar substrates concomitantly with their translocation across the cell membrane. This system is involved in D-mannitol transport. This is PTS system mannitol-specific EIICBA component (mtlA) from Pasteurella multocida (strain Pm70).